A 276-amino-acid chain; its full sequence is Large ribosomal subunit protein uL2 (276 aa).

A disordered region spans residues 221 to 276; sequence RGSAMNPNDHPHGGGEGRAPIGRKSPMTPWGKKARGIKTRDRKKSSNELIIRRRTK. The segment covering 252 to 263 has biased composition (basic residues); it reads KKARGIKTRDRK.

Belongs to the universal ribosomal protein uL2 family. In terms of assembly, part of the 50S ribosomal subunit. Forms a bridge to the 30S subunit in the 70S ribosome.

One of the primary rRNA binding proteins. Required for association of the 30S and 50S subunits to form the 70S ribosome, for tRNA binding and peptide bond formation. It has been suggested to have peptidyltransferase activity; this is somewhat controversial. Makes several contacts with the 16S rRNA in the 70S ribosome. The chain is Large ribosomal subunit protein uL2 from Phytoplasma australiense.